A 330-amino-acid polypeptide reads, in one-letter code: MLPDWKSSLILMAYIIIFLTGLPANLLALRAFVGRIRQPQPAPVHILLLSLTLADLLLLLLLPFKIIEAASNFRWYLPKVVCALTSFGFYSSIYCSTWLLAGISIERYLGVAFPVQYKLSRRPLYGVIAALVAWVMSFGHCTIVIIVQYLNTTEQVRSGNEITCYENFTDNQLDVVLPVRLELCLVLFFIPMAVTIFCYWRFVWIMLSQPLVGAQRRRRAVGLAVVTLLNFLVCFGPYNVSHLVGYHQRKSPWWRSIAVVFSSLNASLDPLLFYFSSSVVRRAFGRGLQVLRNQGSSLLGRRGKDTAEGTNEDRGVGQGEGMPSSDFTTE.

The Extracellular portion of the chain corresponds to 1–12 (MLPDWKSSLILM). A helical membrane pass occupies residues 13 to 33 (AYIIIFLTGLPANLLALRAFV). Residues 34–41 (GRIRQPQP) are Cytoplasmic-facing. A helical membrane pass occupies residues 42–62 (APVHILLLSLTLADLLLLLLL). Residues 63-84 (PFKIIEAASNFRWYLPKVVCAL) are Extracellular-facing. Residues 85–105 (TSFGFYSSIYCSTWLLAGISI) form a helical membrane-spanning segment. Residues 106–126 (ERYLGVAFPVQYKLSRRPLYG) are Cytoplasmic-facing. A helical membrane pass occupies residues 127–147 (VIAALVAWVMSFGHCTIVIIV). Residues 148–173 (QYLNTTEQVRSGNEITCYENFTDNQL) lie on the Extracellular side of the membrane. Residues N151 and N167 are each glycosylated (N-linked (GlcNAc...) asparagine). A helical membrane pass occupies residues 174–194 (DVVLPVRLELCLVLFFIPMAV). Topologically, residues 195–219 (TIFCYWRFVWIMLSQPLVGAQRRRR) are cytoplasmic. Residues 220–240 (AVGLAVVTLLNFLVCFGPYNV) traverse the membrane as a helical segment. The Extracellular segment spans residues 241 to 255 (SHLVGYHQRKSPWWR). Residues 256–276 (SIAVVFSSLNASLDPLLFYFS) traverse the membrane as a helical segment. Residues 277-330 (SSVVRRAFGRGLQVLRNQGSSLLGRRGKDTAEGTNEDRGVGQGEGMPSSDFTTE) are Cytoplasmic-facing. The interval 299–330 (LGRRGKDTAEGTNEDRGVGQGEGMPSSDFTTE) is disordered. Residues 302 to 315 (RGKDTAEGTNEDRG) are compositionally biased toward basic and acidic residues.

Belongs to the G-protein coupled receptor 1 family. In terms of assembly, interacts with FCN1 (via Fibrinogen C-terminal domain). As to expression, expressed at relatively high levels in peripheral blood leukocytes and, to lesser extent, in spleen.

It is found in the cell membrane. G protein-coupled receptor that is activated by a major product of dietary fiber digestion, the short chain fatty acids (SCFAs), and that plays a role in the regulation of whole-body energy homeostasis and in intestinal immunity. In omnivorous mammals, the short chain fatty acids acetate, propionate and butyrate are produced primarily by the gut microbiome that metabolizes dietary fibers. SCFAs serve as a source of energy but also act as signaling molecules. That G protein-coupled receptor is probably coupled to the pertussis toxin-sensitive, G(i/o)-alpha family of G proteins but also to the Gq family. Its activation results in the formation of inositol 1,4,5-trisphosphate, the mobilization of intracellular calcium, the phosphorylation of the MAPK3/ERK1 and MAPK1/ERK2 kinases and the inhibition of intracellular cAMP accumulation. May play a role in glucose homeostasis by regulating the secretion of GLP-1, in response to short-chain fatty acids accumulating in the intestine. May also regulate the production of LEP/Leptin, a hormone acting on the central nervous system to inhibit food intake. Finally, may also regulate whole-body energy homeostasis through adipogenesis regulating both differentiation and lipid storage of adipocytes. In parallel to its role in energy homeostasis, may also mediate the activation of the inflammatory and immune responses by SCFA in the intestine, regulating the rapid production of chemokines and cytokines. May also play a role in the resolution of the inflammatory response and control chemotaxis in neutrophils. In addition to SCFAs, may also be activated by the extracellular lectin FCN1 in a process leading to activation of monocytes and inducing the secretion of interleukin-8/IL-8 in response to the presence of microbes. Among SCFAs, the fatty acids containing less than 6 carbons, the most potent activators are probably acetate, propionate and butyrate. Exhibits a SCFA-independent constitutive G protein-coupled receptor activity. This chain is Free fatty acid receptor 2 (FFAR2), found in Homo sapiens (Human).